We begin with the raw amino-acid sequence, 292 residues long: Cbb3-type cytochrome c oxidase subunit CcoP (292 aa).

The next 2 membrane-spanning stretches (helical) occupy residues 11-31 and 62-82; these read FGLI…SSLI and VGWI…FFFG. Cytochrome c domains follow at residues 116–195 and 205–288; these read ELVD…MAEI and QLID…QSLK. Residues Cys129, Cys132, His133, Met174, Cys219, Cys222, His223, and Met264 each coordinate heme c.

It belongs to the CcoP / FixP family. As to quaternary structure, component of the cbb3-type cytochrome c oxidase at least composed of CcoN, CcoO, CcoQ and CcoP. Heme c serves as cofactor.

Its subcellular location is the cell inner membrane. It functions in the pathway energy metabolism; oxidative phosphorylation. In terms of biological role, C-type cytochrome. Part of the cbb3-type cytochrome c oxidase complex. CcoP subunit is required for transferring electrons from donor cytochrome c via its heme groups to CcoO subunit. From there, electrons are shuttled to the catalytic binuclear center of CcoN subunit where oxygen reduction takes place. The complex also functions as a proton pump. The chain is Cbb3-type cytochrome c oxidase subunit CcoP from Helicobacter pylori (Campylobacter pylori).